A 286-amino-acid polypeptide reads, in one-letter code: Lipoyl synthase (286 aa).

[4Fe-4S] cluster contacts are provided by Cys-29, Cys-34, Cys-40, Cys-55, Cys-59, Cys-62, and Ser-265. In terms of domain architecture, Radical SAM core spans 41–254 (WGSGTATFMI…EKIAYSLGFS (214 aa)).

Belongs to the radical SAM superfamily. Lipoyl synthase family. The cofactor is [4Fe-4S] cluster.

It localises to the cytoplasm. It carries out the reaction [[Fe-S] cluster scaffold protein carrying a second [4Fe-4S](2+) cluster] + N(6)-octanoyl-L-lysyl-[protein] + 2 oxidized [2Fe-2S]-[ferredoxin] + 2 S-adenosyl-L-methionine + 4 H(+) = [[Fe-S] cluster scaffold protein] + N(6)-[(R)-dihydrolipoyl]-L-lysyl-[protein] + 4 Fe(3+) + 2 hydrogen sulfide + 2 5'-deoxyadenosine + 2 L-methionine + 2 reduced [2Fe-2S]-[ferredoxin]. It functions in the pathway protein modification; protein lipoylation via endogenous pathway; protein N(6)-(lipoyl)lysine from octanoyl-[acyl-carrier-protein]: step 2/2. In terms of biological role, catalyzes the radical-mediated insertion of two sulfur atoms into the C-6 and C-8 positions of the octanoyl moiety bound to the lipoyl domains of lipoate-dependent enzymes, thereby converting the octanoylated domains into lipoylated derivatives. In Sulfolobus acidocaldarius (strain ATCC 33909 / DSM 639 / JCM 8929 / NBRC 15157 / NCIMB 11770), this protein is Lipoyl synthase.